Reading from the N-terminus, the 557-residue chain is Probable WRKY transcription factor 20 (557 aa).

Positions 1 to 12 (MNPQANDRKEFQ) are enriched in basic and acidic residues. 2 disordered regions span residues 1 to 36 (MNPQ…GGGA) and 76 to 215 (KPEP…DGYN). A compositionally biased stretch (polar residues) spans 95 to 114 (SASSSSYTGRGFHQNTFTEQ). The segment covering 151-169 (SSHSPSSISDAAGSSSELS) has biased composition (low complexity). Over residues 193–207 (SIQTSQNDSRGSTPS) the composition is skewed to polar residues. Residues 205 to 269 (TPSILADDGY…YKGTHDHPKP (65 aa)) constitute a DNA-binding region (WRKY 1). Residues cysteine 236, cysteine 241, histidine 264, and histidine 266 each contribute to the Zn(2+) site. The segment at 257–348 (DIIYKGTHDH…PDDDDPFSKR (92 aa)) is disordered. Residues 282-299 (QEERLDKYPSSTGRDEKG) show a composition bias toward basic and acidic residues. Residues 303–314 (YNLSNPNEQTGN) show a composition bias toward polar residues. The span at 321–332 (SASDDGGEAAAS) shows a compositional bias: low complexity. A DNA-binding region (WRKY 2) is located at residues 375-440 (SEVDILDDGY…YEGKHDHDVP (66 aa)). The Zn(2+) site is built by cysteine 406, cysteine 411, histidine 435, and histidine 437. Disordered regions lie at residues 433-486 (GKHD…QHQN) and 520-557 (NQYG…QSGP). The span at 520 to 536 (NQYGQRETKNETQNGDI) shows a compositional bias: polar residues.

The protein belongs to the WRKY group I family.

The protein localises to the nucleus. Transcription factor. Interacts specifically with the W box (5'-(T)TGAC[CT]-3'), a frequently occurring elicitor-responsive cis-acting element. This Arabidopsis thaliana (Mouse-ear cress) protein is Probable WRKY transcription factor 20 (WRKY20).